We begin with the raw amino-acid sequence, 93 residues long: MKTLVLLSALVLLAFQVQADPIQNTDEETKTEEQPGEEDQAVSVSFGDPEGTSLQEESLRDLVCYCRKRGCKRREHMNGTCRRGHLMYTLCCR.

An N-terminal signal peptide occupies residues 1–19 (MKTLVLLSALVLLAFQVQA). The propeptide occupies 20-58 (DPIQNTDEETKTEEQPGEEDQAVSVSFGDPEGTSLQEES). The disordered stretch occupies residues 22–54 (IQNTDEETKTEEQPGEEDQAVSVSFGDPEGTSL). 3 disulfides stabilise this stretch: C64–C92, C66–C81, and C71–C91.

This sequence belongs to the alpha-defensin family. As to expression, paneth cells of the small bowel.

The protein resides in the secreted. In terms of biological role, probably contributes to the antimicrobial barrier function of the small bowel mucosa. The chain is Alpha-defensin 13 (Defa13) from Mus musculus (Mouse).